The following is a 324-amino-acid chain: MKPSIILYKKLPDVLLQRLEEHFTVTQVSNLSPQTVEQHAEAFANAEGLLGSSEKVDDALLEKMPKLRATSTISVGYDNFDVDALNARKVLLMHTPTVLTETVADTLMALILATSRRVVEVAERVKAGEWTASIGPDWFGSDVHHKTLGIVGMGRIGMALAQRAHFGFNMPILYNARRQHPQAEERFNARYCDLDTLLQEADFVCLILPLTEETHHLFGAEQFAKMKSSAIFINAGRGPVVDEKALISALQKGEIHAAGLDVFEREPLPVDSPLLAMPNVVALPHIGSATHETRYNMAACAVDNLIAALQGNVDKNCVNPQVAK.

Active-site residues include Arg237 and Glu266. His285 serves as the catalytic Proton donor.

Belongs to the D-isomer specific 2-hydroxyacid dehydrogenase family. GhrB subfamily. In terms of assembly, homodimer.

It is found in the cytoplasm. It carries out the reaction glycolate + NADP(+) = glyoxylate + NADPH + H(+). It catalyses the reaction (R)-glycerate + NAD(+) = 3-hydroxypyruvate + NADH + H(+). The enzyme catalyses (R)-glycerate + NADP(+) = 3-hydroxypyruvate + NADPH + H(+). Its function is as follows. Catalyzes the NADPH-dependent reduction of glyoxylate and hydroxypyruvate into glycolate and glycerate, respectively. The chain is Glyoxylate/hydroxypyruvate reductase B from Escherichia fergusonii (strain ATCC 35469 / DSM 13698 / CCUG 18766 / IAM 14443 / JCM 21226 / LMG 7866 / NBRC 102419 / NCTC 12128 / CDC 0568-73).